The following is a 287-amino-acid chain: MDEIVKNIREGTHVLLPFYETLPELNLSLGKSPLPSLEYGANYFLQISRVNDLNRMPTDMLKLFTHDIMLPESDLDKVYEILKINSVKYYGRSTKADAVVADLSARNKLFKRERDAIKSNNHLTENNLYISDYKMLTFDVFRPLFDFVNEKYCIIKLPTLFGRGVIDTMRIYCSLFKNVRLLKCVSDSWLKDSAIMVASDVCKKNLDLFMSHVKSVTKSSSWKDVNSVQFSILNDPVDTEFINKFLEFSNRVYEALYYVHSLLYSSMTSDSKSIENKHQRRLVKLLL.

The protein belongs to the orthopoxvirus mRNA-capping enzyme regulatory subunit family. In terms of assembly, interacts with the catalytic subunit OPG113.

It is found in the virion. Regulatory subunit of the mRNA cap enzyme which stabilizes the catalytic subunit and enhances its methyltransferase activity through an allosteric mechanism. Heterodimeric mRNA capping enzyme catalyzes the linkage of a N7-methyl-guanosine moiety to the first transcribed nucleotide (cap 0 structure), whereas the methyltransferase OPG102 is responsible for a second methylation at the 2'-O position of the ribose (cap 1 structure). Also involved in early viral gene transcription termination and intermediate viral gene transcription initiation. Early gene transcription termination requires the termination factor VTF, the DNA-dependent ATPase NPH-I/OPG123 and the RAP94/OPG109 subunit of the viral RNA polymerase, as well as the presence of a specific termination motif. Binds, together with RAP94/OPG109, to the termination motif 5'-UUUUUNU-3' in the nascent early mRNA. The polypeptide is mRNA-capping enzyme regulatory subunit OPG124 (OPG124) (Vaccinia virus (strain Copenhagen) (VACV)).